An 85-amino-acid chain; its full sequence is Small ribosomal subunit protein uS15 (85 aa).

It belongs to the universal ribosomal protein uS15 family. In terms of assembly, part of the 30S ribosomal subunit. Forms a bridge to the 50S subunit in the 70S ribosome, contacting the 23S rRNA.

Its function is as follows. One of the primary rRNA binding proteins, it binds directly to 16S rRNA where it helps nucleate assembly of the platform of the 30S subunit by binding and bridging several RNA helices of the 16S rRNA. In terms of biological role, forms an intersubunit bridge (bridge B4) with the 23S rRNA of the 50S subunit in the ribosome. This is Small ribosomal subunit protein uS15 from Fusobacterium nucleatum subsp. nucleatum (strain ATCC 25586 / DSM 15643 / BCRC 10681 / CIP 101130 / JCM 8532 / KCTC 2640 / LMG 13131 / VPI 4355).